The sequence spans 860 residues: Leucine--tRNA ligase (860 aa).

A 'HIGH' region motif is present at residues 42 to 52; sequence PYPSGRLHMGH. Residues 619–623 carry the 'KMSKS' region motif; sequence KMSKS. Lysine 622 is an ATP binding site.

This sequence belongs to the class-I aminoacyl-tRNA synthetase family.

The protein localises to the cytoplasm. The catalysed reaction is tRNA(Leu) + L-leucine + ATP = L-leucyl-tRNA(Leu) + AMP + diphosphate. The polypeptide is Leucine--tRNA ligase (Escherichia coli O81 (strain ED1a)).